The following is a 462-amino-acid chain: Probable peptidoglycan glycosyltransferase FtsW (462 aa).

Residues 1-63 (MGCIVCSDGI…VRDGRKFDAP (63 aa)) are Cytoplasmic-facing. The helical transmembrane segment at 64 to 84 (LLWMVVLMTAFGLLMIYSASV) threads the bilayer. The Periplasmic portion of the chain corresponds to 85 to 97 (YLASKEGGDQFFY). Residues 98–118 (LTRQAGFVVAGLIASGFLWFL) traverse the membrane as a helical segment. Over 119–125 (CRMRTWR) the chain is Cytoplasmic. The helical transmembrane segment at 126 to 146 (RLVPWIFALSGLLLVAVLIAG) threads the bilayer. Topologically, residues 147 to 160 (REINGATRWIPLGP) are periplasmic. Residues 161–181 (LNFQPTELFKLAVILYLASLF) form a helical membrane-spanning segment. Residues 182–227 (TRREEVLRSMESLGWQSIWRGTANLIMSATNPQARRETLEMYGRFR) lie on the Cytoplasmic side of the membrane. A run of 2 helical transmembrane segments spans residues 228–248 (AIILPIMLVAFGLVLIMVQPD) and 249–269 (FGSFVVITVITVGMLFLAGLP). At 270–271 (WK) the chain is on the cytoplasmic side. Residues 272 to 292 (YFFVLVGSVLGGMVLMITAAP) form a helical membrane-spanning segment. Residues 293–348 (YRVQRVVAFLDPWKDPQGAGYQLTHSLMAIGRGEWFGMGLGASLSKRGFLPEAHTD) are Periplasmic-facing. Residues 349-369 (FIFAIIAEEFGFFGMCVLIFC) traverse the membrane as a helical segment. Over 370 to 386 (YGWLVVRAFSIGKQSRD) the chain is Cytoplasmic. A helical transmembrane segment spans residues 387–409 (LGLTFNAYIASGIGIWIGIQSFF). The Periplasmic portion of the chain corresponds to 410–424 (NIGVNIGALPTKGLT). Residues 425-445 (LPLMSYGGSSVFFMLISMMLL) traverse the membrane as a helical segment. The Cytoplasmic segment spans residues 446 to 462 (LRIDYENRRKMRGYRVE).

The protein belongs to the SEDS family. FtsW subfamily.

It localises to the cell inner membrane. It catalyses the reaction [GlcNAc-(1-&gt;4)-Mur2Ac(oyl-L-Ala-gamma-D-Glu-L-Lys-D-Ala-D-Ala)](n)-di-trans,octa-cis-undecaprenyl diphosphate + beta-D-GlcNAc-(1-&gt;4)-Mur2Ac(oyl-L-Ala-gamma-D-Glu-L-Lys-D-Ala-D-Ala)-di-trans,octa-cis-undecaprenyl diphosphate = [GlcNAc-(1-&gt;4)-Mur2Ac(oyl-L-Ala-gamma-D-Glu-L-Lys-D-Ala-D-Ala)](n+1)-di-trans,octa-cis-undecaprenyl diphosphate + di-trans,octa-cis-undecaprenyl diphosphate + H(+). The protein operates within cell wall biogenesis; peptidoglycan biosynthesis. Functionally, peptidoglycan polymerase that is essential for cell division. The sequence is that of Probable peptidoglycan glycosyltransferase FtsW from Neisseria gonorrhoeae (strain NCCP11945).